Here is a 418-residue protein sequence, read N- to C-terminus: Glutamyl-tRNA reductase (418 aa).

Substrate contacts are provided by residues threonine 49–arginine 52, serine 109, glutamate 114–glutamine 116, and glutamine 120. The active-site Nucleophile is the cysteine 50. Glycine 189–isoleucine 194 provides a ligand contact to NADP(+).

The protein belongs to the glutamyl-tRNA reductase family. In terms of assembly, homodimer.

The catalysed reaction is (S)-4-amino-5-oxopentanoate + tRNA(Glu) + NADP(+) = L-glutamyl-tRNA(Glu) + NADPH + H(+). It functions in the pathway porphyrin-containing compound metabolism; protoporphyrin-IX biosynthesis; 5-aminolevulinate from L-glutamyl-tRNA(Glu): step 1/2. Functionally, catalyzes the NADPH-dependent reduction of glutamyl-tRNA(Glu) to glutamate 1-semialdehyde (GSA). The chain is Glutamyl-tRNA reductase from Salmonella choleraesuis (strain SC-B67).